The sequence spans 205 residues: Small ribosomal subunit protein uS4c (205 aa).

A disordered region spans residues 22–42 (TSKISKKTNTPGEHGQPQNKL). Residues 28–42 (KTNTPGEHGQPQNKL) show a composition bias toward polar residues. In terms of domain architecture, S4 RNA-binding spans 94-157 (MRLDNIVYRL…ASRDLVKKFV (64 aa)).

This sequence belongs to the universal ribosomal protein uS4 family. In terms of assembly, part of the 30S ribosomal subunit. Contacts protein S5. The interaction surface between S4 and S5 is involved in control of translational fidelity.

It is found in the plastid. The protein localises to the chloroplast. Its function is as follows. One of the primary rRNA binding proteins, it binds directly to 16S rRNA where it nucleates assembly of the body of the 30S subunit. With S5 and S12 plays an important role in translational accuracy. In Tupiella akineta (Green alga), this protein is Small ribosomal subunit protein uS4c (rps4).